A 765-amino-acid chain; its full sequence is Palmitoyltransferase ZDHHC8 (765 aa).

At 1-13 (MPRSPGTRLKPAK) the chain is on the cytoplasmic side. Residues 14–34 (YIPVATAAALLVGSSTLFFVF) form a helical membrane-spanning segment. The Lumenal portion of the chain corresponds to 35–52 (TCPWLTRAVSPAVPVYNG). A helical transmembrane segment spans residues 53 to 73 (IIFLFVLANFSMATFMDPGVF). Over 74 to 148 (PRADEDEDKE…NCIGRRNYRY (75 aa)) the chain is Cytoplasmic. The region spanning 104–154 (KWCATCHFYRPPRCSHCSVCDNCVEDFDHHCPWVNNCIGRRNYRYFFLFLL) is the DHHC domain. Cys134 acts as the S-palmitoyl cysteine intermediate in catalysis. The helical transmembrane segment at 149–169 (FFLFLLSLSAHMVGVVAFGLV) threads the bilayer. Residues 170 to 190 (YVLNHAEGLGAAHTTITMAVM) are Lumenal-facing. Residues 191–211 (CVAGLFFIPVIGLTGFHVVLV) form a helical membrane-spanning segment. Over 212-765 (TRGRTTNEQV…VGGTTYEISV (554 aa)) the chain is Cytoplasmic. Positions 293-352 (GLGRSKSKGSLDRLDEKPLDLGPPLPPKIEAGTFSSDLQTPRPGSAESALSVQRTSPPTP) are disordered. Over residues 301 to 311 (GSLDRLDEKPL) the composition is skewed to basic and acidic residues. A Phosphoserine modification is found at Ser337. Arg441 carries the omega-N-methylarginine modification. A disordered region spans residues 509-540 (LHPGATGDPPRPLPRSFSPVLGPRPREPSPVR). Residues Ser606, Ser627, Ser675, Ser682, Ser725, and Ser743 each carry the phosphoserine modification. Residues 613–747 (GPGFGGARNP…PGPSASPTRH (135 aa)) form a disordered region. Positions 622 to 653 (PALQTSLSSLSSSVSRAPRTSSSSLQADQASS) are enriched in low complexity.

This sequence belongs to the DHHC palmitoyltransferase family. ERF2/ZDHHC9 subfamily. In terms of tissue distribution, widely expressed.

Its subcellular location is the golgi apparatus membrane. It localises to the mitochondrion membrane. It catalyses the reaction L-cysteinyl-[protein] + hexadecanoyl-CoA = S-hexadecanoyl-L-cysteinyl-[protein] + CoA. Functionally, palmitoyltransferase that catalyzes the addition of palmitate onto various protein substrates and therefore functions in several unrelated biological processes. Through the palmitoylation of ABCA1 regulates the localization of the transporter to the plasma membrane and thereby regulates its function in cholesterol and phospholipid efflux. Could also pamitoylate the D(2) dopamine receptor DRD2 and regulate its stability and localization to the plasma membrane. Could also play a role in glutamatergic transmission. In terms of biological role, (Microbial infection) Able to palmitoylate SARS coronavirus-2/SARS-CoV-2 spike protein following its synthesis in the endoplasmic reticulum (ER). In the infected cell, promotes spike biogenesis by protecting it from premature ER degradation, increases half-life and controls the lipid organization of its immediate membrane environment. Once the virus has formed, spike palmitoylation controls fusion with the target cell. The chain is Palmitoyltransferase ZDHHC8 from Homo sapiens (Human).